Reading from the N-terminus, the 244-residue chain is High frequency lysogenization protein HflD homolog (244 aa).

It belongs to the HflD family.

It is found in the cytoplasm. The protein resides in the cell inner membrane. This is High frequency lysogenization protein HflD homolog from Acinetobacter baumannii (strain ATCC 17978 / DSM 105126 / CIP 53.77 / LMG 1025 / NCDC KC755 / 5377).